We begin with the raw amino-acid sequence, 344 residues long: Follistatin (344 aa).

Residues 1 to 29 (MVCARHQPGGLCLLLLLLCQFMEDRSAQA) form the signal peptide. A TB domain is found at 30–103 (GNCWLRQAKN…TCENVDCGPG (74 aa)). Intrachain disulfides connect C32/C55, C42/C88, C56/C91, C95/C106, C100/C116, C118/C150, C122/C143, C132/C164, C168/C179, C173/C189, C192/C225, C196/C218, C207/C239, C245/C256, C250/C267, C270/C302, C274/C295, and C284/C316. In terms of domain architecture, Follistatin-like 1 spans 94 to 117 (TCENVDCGPGKKCRMNKKNKPRCV). The Kazal-like 1 domain maps to 112–166 (NKPRCVCAPDCSNITWKGPVCGLDGKTYRNECALLKARCKEQPELEVQYQGKCKK). N-linked (GlcNAc...) asparagine glycosylation is present at N124. In terms of domain architecture, Follistatin-like 2 spans 167–190 (TCRDVFCPGSSTCVVDQTNNAYCV). The region spanning 186–241 (NAYCVTCNRICPEPSSSEQYLCGNDGVTYSSACHLRKATCLLGRSIGLAYEGKCIK) is the Kazal-like 2 domain. Positions 244-268 (SCEDIQCGGGKKCLWDSKVGRGRCS) constitute a Follistatin-like 3 domain. Residues 264 to 318 (RGRCSLCDELCPDSKSDEPVCASDNATYASECAMKEAACSSGVLLEVKHSGSCNS) form the Kazal-like 3 domain. Residue N288 is glycosylated (N-linked (GlcNAc...) asparagine). Residues 315–344 (SCNSISEETEEEEEEEDQDYSFPISSILEW) form a disordered region. Acidic residues predominate over residues 321-333 (EETEEEEEEEDQD).

In terms of assembly, interacts with GDF11. Interacts with activin A/INHBA. Interacts with myostatin/MSTN.

It is found in the secreted. The protein localises to the nucleus. Its subcellular location is the nucleolus. In terms of biological role, multifunctional regulatory protein whose primary function is to antagonize members of the transforming growth factor beta (TGF-beta) superfamily including activin, myostatin, GDF11 or bone morphogenetic proteins (BMPs). Mechanistically, binds to these ligands in the extracellular space, blocking their type II receptor-binding site to inhibit downstream signaling. Plays an essential role in muscle fiber formation and growth both by preventing the repressive effects of myostatin and through SMAD3/AKT/mTOR signaling independently of myostatin. Also promotes neural differentiation by antagonizing the action BMP4. Acts as a specific inhibitor of the biosynthesis and secretion of pituitary follicle stimulating hormone (FSH) by sequestering activin A/INHBA. On the other hand, translocates into the nucleus where it down-regulates rRNA synthesis and ribosome biogenesis to maintain cellular energy homeostasis by binding to rDNA. In Mus musculus (Mouse), this protein is Follistatin.